We begin with the raw amino-acid sequence, 207 residues long: Superoxide dismutase [Mn] (207 aa).

H28, H76, D160, and H164 together coordinate Mn(2+).

The protein belongs to the iron/manganese superoxide dismutase family. Requires Mn(2+) as cofactor.

The catalysed reaction is 2 superoxide + 2 H(+) = H2O2 + O2. Functionally, destroys superoxide anion radicals which are normally produced within the cells and which are toxic to biological systems. In Mycobacterium intracellulare (strain ATCC 13950 / DSM 43223 / JCM 6384 / NCTC 13025 / 3600), this protein is Superoxide dismutase [Mn] (sodA).